A 199-amino-acid chain; its full sequence is MSKQNKKDWKKFKDEHKEEYKVENEILEEETDEESQHQEPALGHPSYTALEEQLTLAEQKAHENWEKSVRALAELENVRRRMEREVANAHKYGVEKLISALLPVVDSLEQALQLADKNSDPSMHEGLELTMKLFLDALQKFDVEQIDPLGQTFDPQQHEAMSMQPAPGAPPNSVITVFQKGYKLSDRVIRPARVIVSTK.

The interval 20–52 is disordered; sequence YKVENEILEEETDEESQHQEPALGHPSYTALEE.

It belongs to the GrpE family. As to quaternary structure, homodimer.

It is found in the cytoplasm. Functionally, participates actively in the response to hyperosmotic and heat shock by preventing the aggregation of stress-denatured proteins, in association with DnaK and GrpE. It is the nucleotide exchange factor for DnaK and may function as a thermosensor. Unfolded proteins bind initially to DnaJ; upon interaction with the DnaJ-bound protein, DnaK hydrolyzes its bound ATP, resulting in the formation of a stable complex. GrpE releases ADP from DnaK; ATP binding to DnaK triggers the release of the substrate protein, thus completing the reaction cycle. Several rounds of ATP-dependent interactions between DnaJ, DnaK and GrpE are required for fully efficient folding. The sequence is that of Protein GrpE from Legionella pneumophila (strain Corby).